Consider the following 465-residue polypeptide: Dihydrolipoyl dehydrogenase (465 aa).

FAD-binding positions include 34-42 (EKREAGGTC), Lys51, and Gly114. Cys42 and Cys47 form a disulfide bridge. NAD(+) is bound by residues 180–184 (GGGVI), Glu203, Val237, and 264–267 (SIGR). 2 residues coordinate FAD: Asp307 and Ala315. His439 (proton acceptor) is an active-site residue.

The protein belongs to the class-I pyridine nucleotide-disulfide oxidoreductase family. FAD serves as cofactor.

The protein localises to the cytoplasm. It catalyses the reaction N(6)-[(R)-dihydrolipoyl]-L-lysyl-[protein] + NAD(+) = N(6)-[(R)-lipoyl]-L-lysyl-[protein] + NADH + H(+). Its function is as follows. The branched-chain alpha-keto dehydrogenase complex catalyzes the overall conversion of alpha-keto acids to acyl-CoA and CO(2). It contains multiple copies of 3 enzymatic components: branched-chain alpha-keto acid decarboxylase (E1), lipoamide acyltransferase (E2) and lipoamide dehydrogenase (E3). This is Dihydrolipoyl dehydrogenase (lpdA) from Chlamydia trachomatis serovar D (strain ATCC VR-885 / DSM 19411 / UW-3/Cx).